The chain runs to 469 residues: Aspartyl/glutamyl-tRNA(Asn/Gln) amidotransferase subunit B (469 aa).

This sequence belongs to the GatB/GatE family. GatB subfamily. In terms of assembly, heterotrimer of A, B and C subunits.

It carries out the reaction L-glutamyl-tRNA(Gln) + L-glutamine + ATP + H2O = L-glutaminyl-tRNA(Gln) + L-glutamate + ADP + phosphate + H(+). The enzyme catalyses L-aspartyl-tRNA(Asn) + L-glutamine + ATP + H2O = L-asparaginyl-tRNA(Asn) + L-glutamate + ADP + phosphate + 2 H(+). Functionally, allows the formation of correctly charged Asn-tRNA(Asn) or Gln-tRNA(Gln) through the transamidation of misacylated Asp-tRNA(Asn) or Glu-tRNA(Gln) in organisms which lack either or both of asparaginyl-tRNA or glutaminyl-tRNA synthetases. The reaction takes place in the presence of glutamine and ATP through an activated phospho-Asp-tRNA(Asn) or phospho-Glu-tRNA(Gln). The chain is Aspartyl/glutamyl-tRNA(Asn/Gln) amidotransferase subunit B from Thermus thermophilus (strain ATCC 27634 / DSM 579 / HB8).